The sequence spans 73 residues: Cytochrome b559 subunit alpha (73 aa).

A helical transmembrane segment spans residues 21 to 35 (IIHSITVPSLFIAGW). His-23 contributes to the heme binding site.

This sequence belongs to the PsbE/PsbF family. As to quaternary structure, heterodimer of an alpha subunit and a beta subunit. PSII is composed of 1 copy each of membrane proteins PsbA, PsbB, PsbC, PsbD, PsbE, PsbF, PsbH, PsbI, PsbJ, PsbK, PsbL, PsbM, PsbT, PsbY, PsbZ, Psb30/Ycf12, at least 3 peripheral proteins of the oxygen-evolving complex and a large number of cofactors. It forms dimeric complexes. The cofactor is heme b.

Its subcellular location is the plastid. The protein resides in the chloroplast thylakoid membrane. This b-type cytochrome is tightly associated with the reaction center of photosystem II (PSII). PSII is a light-driven water:plastoquinone oxidoreductase that uses light energy to abstract electrons from H(2)O, generating O(2) and a proton gradient subsequently used for ATP formation. It consists of a core antenna complex that captures photons, and an electron transfer chain that converts photonic excitation into a charge separation. This Bigelowiella natans (Pedinomonas minutissima) protein is Cytochrome b559 subunit alpha.